Consider the following 192-residue polypeptide: Ion-translocating oxidoreductase complex subunit B (192 aa).

A hydrophobic region spans residues Met1–Ser26. In terms of domain architecture, 4Fe-4S spans Glu32–Val91. [4Fe-4S] cluster-binding residues include Cys49, Cys52, Cys57, Cys74, Cys117, Cys120, Cys123, Cys127, Cys147, Cys150, Cys153, and Cys157. 4Fe-4S ferredoxin-type domains are found at residues Met108–Arg137 and Ala138–Val167.

The protein belongs to the 4Fe4S bacterial-type ferredoxin family. RnfB subfamily. In terms of assembly, the complex is composed of six subunits: RsxA, RsxB, RsxC, RsxD, RsxE and RsxG. It depends on [4Fe-4S] cluster as a cofactor.

The protein localises to the cell inner membrane. Its function is as follows. Part of a membrane-bound complex that couples electron transfer with translocation of ions across the membrane. Required to maintain the reduced state of SoxR. The chain is Ion-translocating oxidoreductase complex subunit B from Escherichia coli O6:K15:H31 (strain 536 / UPEC).